A 109-amino-acid chain; its full sequence is UPF0060 membrane protein RC1_3291 (109 aa).

The next 4 helical transmembrane spans lie at 4–24, 31–51, 59–79, and 88–108; these read IATY…FWAW, PLWL…LTRI, AYAA…WLVE, and TLGT…PRGG.

It belongs to the UPF0060 family.

The protein resides in the cell inner membrane. The polypeptide is UPF0060 membrane protein RC1_3291 (Rhodospirillum centenum (strain ATCC 51521 / SW)).